Reading from the N-terminus, the 180-residue chain is Adenine phosphoribosyltransferase (180 aa).

It belongs to the purine/pyrimidine phosphoribosyltransferase family. As to quaternary structure, homodimer.

It is found in the cytoplasm. The enzyme catalyses AMP + diphosphate = 5-phospho-alpha-D-ribose 1-diphosphate + adenine. The protein operates within purine metabolism; AMP biosynthesis via salvage pathway; AMP from adenine: step 1/1. Functionally, catalyzes a salvage reaction resulting in the formation of AMP, that is energically less costly than de novo synthesis. In Butyrivibrio fibrisolvens, this protein is Adenine phosphoribosyltransferase.